Consider the following 315-residue polypeptide: Methionyl-tRNA formyltransferase (315 aa).

113–116 (SLLP) contacts (6S)-5,6,7,8-tetrahydrofolate.

This sequence belongs to the Fmt family.

The catalysed reaction is L-methionyl-tRNA(fMet) + (6R)-10-formyltetrahydrofolate = N-formyl-L-methionyl-tRNA(fMet) + (6S)-5,6,7,8-tetrahydrofolate + H(+). In terms of biological role, attaches a formyl group to the free amino group of methionyl-tRNA(fMet). The formyl group appears to play a dual role in the initiator identity of N-formylmethionyl-tRNA by promoting its recognition by IF2 and preventing the misappropriation of this tRNA by the elongation apparatus. In Shigella boydii serotype 4 (strain Sb227), this protein is Methionyl-tRNA formyltransferase.